An 83-amino-acid polypeptide reads, in one-letter code: Mitochondrial import inner membrane translocase subunit Tim8 B (83 aa).

Ala2 is subject to N-acetylalanine. A Twin CX3C motif motif is present at residues Cys36 to Cys59. Cystine bridges form between Cys36/Cys59 and Cys40/Cys55.

Belongs to the small Tim family. As to quaternary structure, heterohexamer; possibly composed of 3 copies of TIMM8B and 3 copies of TIMM13, named soluble 70 kDa complex. Associates with the TIM22 complex, whose core is composed of TIMM22. Ubiquitous, with highest expression in heart, kidney, liver and skeletal muscle.

Its subcellular location is the mitochondrion inner membrane. Functionally, probable mitochondrial intermembrane chaperone that participates in the import and insertion of some multi-pass transmembrane proteins into the mitochondrial inner membrane. Also required for the transfer of beta-barrel precursors from the TOM complex to the sorting and assembly machinery (SAM complex) of the outer membrane. Acts as a chaperone-like protein that protects the hydrophobic precursors from aggregation and guide them through the mitochondrial intermembrane space. This is Mitochondrial import inner membrane translocase subunit Tim8 B (TIMM8B) from Homo sapiens (Human).